Reading from the N-terminus, the 289-residue chain is uncharacterized protein (289 aa).

The 58-residue stretch at 1–58 folds into the HTH lysR-type domain; that stretch reads MDEKDWILLKILHEEQSVTKTAERLFTSQPSITYRLKKIEEIFGIELFTKRHKGITFT. Residues 18 to 37 constitute a DNA-binding region (H-T-H motif); sequence VTKTAERLFTSQPSITYRLK.

The protein belongs to the LysR transcriptional regulatory family.

This is an uncharacterized protein from Bacillus subtilis (strain 168).